We begin with the raw amino-acid sequence, 32 residues long: Photosystem II reaction center protein Z (32 aa).

Residues 12-32 (FGAAAWIGLVLLVGTLYYFVV) traverse the membrane as a helical segment.

This sequence belongs to the PsbZ family. As to quaternary structure, PSII is composed of 1 copy each of membrane proteins PsbA, PsbB, PsbC, PsbD, PsbE, PsbF, PsbH, PsbI, PsbJ, PsbK, PsbL, PsbM, PsbT, PsbY, PsbZ, Psb30/Ycf12, at least 3 peripheral proteins of the oxygen-evolving complex and a large number of cofactors. It forms dimeric complexes.

The protein localises to the plastid. It is found in the chloroplast thylakoid membrane. May control the interaction of photosystem II (PSII) cores with the light-harvesting antenna, regulates electron flow through the 2 photosystem reaction centers. PSII is a light-driven water plastoquinone oxidoreductase, using light energy to abstract electrons from H(2)O, generating a proton gradient subsequently used for ATP formation. In Euglena granulata, this protein is Photosystem II reaction center protein Z.